A 426-amino-acid chain; its full sequence is Dihydroorotase (426 aa).

Residues His-58 and His-60 each coordinate Zn(2+). Residues 60 to 62 (HLR) and Asn-92 contribute to the substrate site. Residues Asp-150, His-177, and His-230 each coordinate Zn(2+). Asn-276 lines the substrate pocket. Asp-303 lines the Zn(2+) pocket. Asp-303 is an active-site residue. Residues His-307 and 321-322 (FG) each bind substrate.

The protein belongs to the metallo-dependent hydrolases superfamily. DHOase family. Class I DHOase subfamily. It depends on Zn(2+) as a cofactor.

The enzyme catalyses (S)-dihydroorotate + H2O = N-carbamoyl-L-aspartate + H(+). Its pathway is pyrimidine metabolism; UMP biosynthesis via de novo pathway; (S)-dihydroorotate from bicarbonate: step 3/3. Its function is as follows. Catalyzes the reversible cyclization of carbamoyl aspartate to dihydroorotate. The chain is Dihydroorotase from Listeria monocytogenes serotype 4a (strain HCC23).